Here is a 308-residue protein sequence, read N- to C-terminus: RNA pseudouridylate synthase domain-containing protein 1 (308 aa).

Met1 carries the post-translational modification N-acetylmethionine. Residue Asp67 is part of the active site. Residues 257 to 292 (APDPDPSEGGPGPCSPCTPLPGPGRPPPPPETEVQR) are disordered. Pro residues predominate over residues 269–287 (PCSPCTPLPGPGRPPPPPE).

Belongs to the pseudouridine synthase RluA family.

The protein is RNA pseudouridylate synthase domain-containing protein 1 (RPUSD1) of Bos taurus (Bovine).